The sequence spans 415 residues: Serine--tRNA ligase (415 aa).

231–233 serves as a coordination point for L-serine; sequence TAE. 262–264 provides a ligand contact to ATP; the sequence is RSE. Glu285 contributes to the L-serine binding site. Residue 349 to 352 participates in ATP binding; it reads EISS. Ser383 lines the L-serine pocket.

It belongs to the class-II aminoacyl-tRNA synthetase family. Type-1 seryl-tRNA synthetase subfamily. In terms of assembly, homodimer. The tRNA molecule binds across the dimer.

It localises to the cytoplasm. The enzyme catalyses tRNA(Ser) + L-serine + ATP = L-seryl-tRNA(Ser) + AMP + diphosphate + H(+). It carries out the reaction tRNA(Sec) + L-serine + ATP = L-seryl-tRNA(Sec) + AMP + diphosphate + H(+). It functions in the pathway aminoacyl-tRNA biosynthesis; selenocysteinyl-tRNA(Sec) biosynthesis; L-seryl-tRNA(Sec) from L-serine and tRNA(Sec): step 1/1. In terms of biological role, catalyzes the attachment of serine to tRNA(Ser). Is also able to aminoacylate tRNA(Sec) with serine, to form the misacylated tRNA L-seryl-tRNA(Sec), which will be further converted into selenocysteinyl-tRNA(Sec). This is Serine--tRNA ligase from Helicobacter pylori (strain Shi470).